The primary structure comprises 55 residues: Large ribosomal subunit protein bL33 (55 aa).

It belongs to the bacterial ribosomal protein bL33 family. Part of the 50S ribosomal subunit. Contacts protein L35.

Functionally, binds the 23S rRNA and the E site tRNA. The polypeptide is Large ribosomal subunit protein bL33 (rpmG) (Deinococcus radiodurans (strain ATCC 13939 / DSM 20539 / JCM 16871 / CCUG 27074 / LMG 4051 / NBRC 15346 / NCIMB 9279 / VKM B-1422 / R1)).